We begin with the raw amino-acid sequence, 797 residues long: MQNEYVDMNSSSEDSDGDSILEEGRLRPSFRGQQKERDMLGIFGEEDEDGFHNSGIGSARLRRKNISFVEKSEQVKANKQVTADDLLEAHSIPQLKNKNDEVSQAKNIPKMKFNTTGFGAKMLEKMGYKQGQGLGANAEGIAEPVQSKLRPERVGLGAVRERTEKQRKEAIARGEISDSEDEKHTVKQKPLREKKKKPLKSSEEISKDMGSYNLPRFLASLIDASLNDTKEIEFVTSNKEELGLEGRDMSTSGINQLSRLARVECEHHASAWQQLQARRAYVKMELKRVTTEFDEKSVEISRLEKLLGKVMEVKSRSMEFTVPEAEIDVIEKRLQPLNNLIETLPVEFSEASMHFELDSVAVSILAFVLSEPIKNWDVWKHPYFMLESFLSWKNSLYSKDFRPKREESSTFMDIDVEFDDELEGQSLTHYESFMMFVWKKKIGEELKKWIIQDSLKALQLLEAWDPVVPEKVKDSLIQDDILPRLKDAVSKWNPKLKLKKNDSLHHCIFPWLPYLEKHADSLLQSVLVQFSLILSPWKIKNGSIDDFSVWRSAFANDALDRLLEKVILPKLEKLMDEELVIDPSNQDLEIFFIILSWKGSFKAMVFGQLFADHFFPKWLETLYQWLTEAPNFDEASEWYTWWKSVFPKDLLSNAYIQQGFSKGLDMMNECLENKSITAPLPFAKDSTKGVNLQFSKEKHEFTAESDDTTSYDEPLVSFRELVEEFCAENSLLFVPLRRSHLSTGSALFRISTQASKARGITVYLRNDIIWKKSPGASEDTPYDPIGFNEILLMFNNN.

Residues 1–12 (MQNEYVDMNSSS) show a composition bias toward polar residues. Disordered stretches follow at residues 1 to 33 (MQNEYVDMNSSSEDSDGDSILEEGRLRPSFRGQ) and 159 to 204 (VRER…SSEE). The region spanning 115–161 (TTGFGAKMLEKMGYKQGQGLGANAEGIAEPVQSKLRPERVGLGAVRE) is the G-patch domain. The segment covering 159-185 (VRERTEKQRKEAIARGEISDSEDEKHT) has biased composition (basic and acidic residues). Over residues 186-199 (VKQKPLREKKKKPL) the composition is skewed to basic residues.

The protein belongs to the TFP11/STIP family.

The protein resides in the cytoplasm. The protein localises to the cytoskeleton. It localises to the microtubule organizing center. It is found in the spindle pole body. In Schizosaccharomyces pombe (strain 972 / ATCC 24843) (Fission yeast), this protein is G-patch domain-containing protein C1486.03.